We begin with the raw amino-acid sequence, 384 residues long: Putative aminohydrolase MTH_994 (384 aa).

Zn(2+)-binding residues include H60, H62, H207, and D291.

This sequence belongs to the metallo-dependent hydrolases superfamily. ATZ/TRZ family.

This Methanothermobacter thermautotrophicus (strain ATCC 29096 / DSM 1053 / JCM 10044 / NBRC 100330 / Delta H) (Methanobacterium thermoautotrophicum) protein is Putative aminohydrolase MTH_994.